We begin with the raw amino-acid sequence, 155 residues long: S-ribosylhomocysteine lyase (155 aa).

Residues His58, His62, and Cys125 each coordinate Fe cation.

The protein belongs to the LuxS family. In terms of assembly, homodimer. It depends on Fe cation as a cofactor.

The enzyme catalyses S-(5-deoxy-D-ribos-5-yl)-L-homocysteine = (S)-4,5-dihydroxypentane-2,3-dione + L-homocysteine. In terms of biological role, involved in the synthesis of autoinducer 2 (AI-2) which is secreted by bacteria and is used to communicate both the cell density and the metabolic potential of the environment. The regulation of gene expression in response to changes in cell density is called quorum sensing. Catalyzes the transformation of S-ribosylhomocysteine (RHC) to homocysteine (HC) and 4,5-dihydroxy-2,3-pentadione (DPD). The polypeptide is S-ribosylhomocysteine lyase (Helicobacter pylori (strain HPAG1)).